The primary structure comprises 368 residues: Glutamate 5-kinase (368 aa).

Lys11 contributes to the ATP binding site. Substrate contacts are provided by Ser51, Asp138, and Asn150. Residues 170–171 (TD) and 212–218 (TGGMATK) contribute to the ATP site. The PUA domain maps to 276–354 (AGEIIVDHGA…QQISQILGYE (79 aa)).

This sequence belongs to the glutamate 5-kinase family.

It localises to the cytoplasm. It catalyses the reaction L-glutamate + ATP = L-glutamyl 5-phosphate + ADP. It functions in the pathway amino-acid biosynthesis; L-proline biosynthesis; L-glutamate 5-semialdehyde from L-glutamate: step 1/2. In terms of biological role, catalyzes the transfer of a phosphate group to glutamate to form L-glutamate 5-phosphate. The polypeptide is Glutamate 5-kinase (Photorhabdus laumondii subsp. laumondii (strain DSM 15139 / CIP 105565 / TT01) (Photorhabdus luminescens subsp. laumondii)).